The following is a 277-amino-acid chain: Anamorsin homolog 2 (277 aa).

The segment at 1–141 is N-terminal SAM-like domain; it reads MDTQPIVLVI…RKPAWDTGSS (141 aa). The interval 141-186 is linker; that stretch reads SFKLKKKVAQKPANVVTFDIPAFKVQLGDDLDDLIDEDSLLTEEDL. [2Fe-2S] cluster is bound by residues Cys-197, Cys-207, Cys-210, and Cys-212. Residues 197–212 form a fe-S binding site A region; it reads CEVGKAGRKACKNCTC. [4Fe-4S] cluster-binding residues include Cys-238, Cys-241, Cys-249, and Cys-252. 2 consecutive short sequence motifs (cx2C motif) follow at residues 238–241 and 249–252; these read CGSC and CSTC. The fe-S binding site B stretch occupies residues 238–252; that stretch reads CGSCGLGDAFRCSTC.

This sequence belongs to the anamorsin family. As to quaternary structure, monomer. It depends on [2Fe-2S] cluster as a cofactor. [4Fe-4S] cluster is required as a cofactor.

The protein localises to the cytoplasm. It localises to the mitochondrion intermembrane space. Its function is as follows. Component of the cytosolic iron-sulfur (Fe-S) protein assembly (CIA) machinery. Required for the maturation of extramitochondrial Fe-S proteins. Part of an electron transfer chain functioning in an early step of cytosolic Fe-S biogenesis, facilitating the de novo assembly of a [4Fe-4S] cluster on the cytosolic Fe-S scaffold complex. Electrons are transferred from NADPH via a FAD- and FMN-containing diflavin oxidoreductase. Together with the diflavin oxidoreductase, also required for the assembly of the diferric tyrosyl radical cofactor of ribonucleotide reductase (RNR), probably by providing electrons for reduction during radical cofactor maturation in the catalytic small subunit. In Picea sitchensis (Sitka spruce), this protein is Anamorsin homolog 2.